Reading from the N-terminus, the 258-residue chain is Global transcriptional regulator CodY (258 aa).

A GAF domain region spans residues 1 to 156 (MSILLNKTRK…SATIVGLEIL (156 aa)). Positions 204–223 (ASKIADKVGITRSVIVNALR) form a DNA-binding region, H-T-H motif.

Belongs to the CodY family.

It localises to the cytoplasm. Its function is as follows. DNA-binding global transcriptional regulator which is involved in the adaptive response to starvation and acts by directly or indirectly controlling the expression of numerous genes in response to nutrient availability. During rapid exponential growth, CodY is highly active and represses genes whose products allow adaptation to nutrient depletion. The polypeptide is Global transcriptional regulator CodY (Clostridium acetobutylicum (strain ATCC 824 / DSM 792 / JCM 1419 / IAM 19013 / LMG 5710 / NBRC 13948 / NRRL B-527 / VKM B-1787 / 2291 / W)).